The chain runs to 145 residues: D-aminoacyl-tRNA deacylase (145 aa).

Residues 137–138 carry the Gly-cisPro motif, important for rejection of L-amino acids motif; that stretch reads GP.

This sequence belongs to the DTD family. Homodimer.

It is found in the cytoplasm. It catalyses the reaction glycyl-tRNA(Ala) + H2O = tRNA(Ala) + glycine + H(+). The enzyme catalyses a D-aminoacyl-tRNA + H2O = a tRNA + a D-alpha-amino acid + H(+). An aminoacyl-tRNA editing enzyme that deacylates mischarged D-aminoacyl-tRNAs. Also deacylates mischarged glycyl-tRNA(Ala), protecting cells against glycine mischarging by AlaRS. Acts via tRNA-based rather than protein-based catalysis; rejects L-amino acids rather than detecting D-amino acids in the active site. By recycling D-aminoacyl-tRNA to D-amino acids and free tRNA molecules, this enzyme counteracts the toxicity associated with the formation of D-aminoacyl-tRNA entities in vivo and helps enforce protein L-homochirality. This chain is D-aminoacyl-tRNA deacylase, found in Legionella pneumophila (strain Lens).